The following is a 672-amino-acid chain: Putative per-hexamer repeat protein 5 (672 aa).

7 stretches are compositionally biased toward gly residues: residues 141–161 (TGTG…GTGT), 171–191 (TDRG…GTGT), 215–233 (TGTG…GTDT), 243–263 (TGTG…GTGT), 273–295 (TDRG…GTGT), 303–355 (TGTG…GSGS), and 365–389 (TGTG…GSGS). Disordered stretches follow at residues 141–193 (TGTG…GTGT) and 213–672 (TGTG…TGTA). Residues 390 to 424 (GTAKVTGTATTTATVTETGTAKVTGTDTGTAKVTG) show a composition bias toward low complexity. Residues 425-469 (TGTGTGTGTGTGTGTGTGTGTGTGTGTGTGTGTGTGTGTGTGSGS) show a composition bias toward gly residues. A compositionally biased stretch (low complexity) spans 470–486 (GTAKVTGTDTGTAKVTG). A compositionally biased stretch (gly residues) spans 487-537 (TGTGTGTGTGTGTGTGTGTGTGTGSGSGSGSGSGSGSGTGTGTGLGSGSGS). Residues 538–552 (GTAKVTGTGTAKVTG) are compositionally biased toward low complexity. Residues 553 to 617 (TGTGTGTGTG…GTGTGTGTGT (65 aa)) are compositionally biased toward gly residues. Low complexity predominate over residues 618-636 (GTSTVTVRGTGTGTATATG). 2 stretches are compositionally biased toward gly residues: residues 637–653 (TGTG…GTGT) and 663–672 (RGTGTGTGTA).

The chain is Putative per-hexamer repeat protein 5 (Phxr5) from Mus musculus (Mouse).